The primary structure comprises 142 residues: Large ribosomal subunit protein uL11 (142 aa).

The protein belongs to the universal ribosomal protein uL11 family. In terms of assembly, part of the ribosomal stalk of the 50S ribosomal subunit. Interacts with L10 and the large rRNA to form the base of the stalk. L10 forms an elongated spine to which L12 dimers bind in a sequential fashion forming a multimeric L10(L12)X complex. Post-translationally, one or more lysine residues are methylated.

Its function is as follows. Forms part of the ribosomal stalk which helps the ribosome interact with GTP-bound translation factors. The chain is Large ribosomal subunit protein uL11 from Citrobacter koseri (strain ATCC BAA-895 / CDC 4225-83 / SGSC4696).